Here is a 268-residue protein sequence, read N- to C-terminus: Tryptophan synthase alpha chain (268 aa).

Active-site proton acceptor residues include glutamate 49 and aspartate 60.

Belongs to the TrpA family. In terms of assembly, tetramer of two alpha and two beta chains.

The enzyme catalyses (1S,2R)-1-C-(indol-3-yl)glycerol 3-phosphate + L-serine = D-glyceraldehyde 3-phosphate + L-tryptophan + H2O. Its pathway is amino-acid biosynthesis; L-tryptophan biosynthesis; L-tryptophan from chorismate: step 5/5. Its function is as follows. The alpha subunit is responsible for the aldol cleavage of indoleglycerol phosphate to indole and glyceraldehyde 3-phosphate. This chain is Tryptophan synthase alpha chain, found in Escherichia coli O81 (strain ED1a).